The sequence spans 84 residues: Small ribosomal subunit protein bS20 (84 aa).

The disordered stretch occupies residues 1 to 25 (MANIVSNEKTYRHTQKVRKENHAKM).

This sequence belongs to the bacterial ribosomal protein bS20 family.

Functionally, binds directly to 16S ribosomal RNA. The sequence is that of Small ribosomal subunit protein bS20 from Ureaplasma urealyticum serovar 10 (strain ATCC 33699 / Western).